The sequence spans 389 residues: Phosphoglycerate kinase (389 aa).

Substrate is bound by residues 21–23, R36, 59–62, R112, and R145; these read DLN and HLGR. ATP is bound by residues K196, E318, and 344–347; that span reads GGDS.

Belongs to the phosphoglycerate kinase family. In terms of assembly, monomer.

The protein localises to the cytoplasm. It carries out the reaction (2R)-3-phosphoglycerate + ATP = (2R)-3-phospho-glyceroyl phosphate + ADP. It participates in carbohydrate degradation; glycolysis; pyruvate from D-glyceraldehyde 3-phosphate: step 2/5. The chain is Phosphoglycerate kinase from Desulfovibrio desulfuricans (strain ATCC 27774 / DSM 6949 / MB).